The primary structure comprises 1112 residues: Lysylphosphatidylglycerol biosynthesis bifunctional protein LysX (1112 aa).

Positions 1–613 (MTLTSPPRTR…VLHHDGTAPD (613 aa)) are phosphatidylglycerol lysyltransferase. 7 helical membrane passes run 18 to 38 (VPAAAGWTVGVIATLSLIASV), 60 to 80 (FPDTSFAWAFVLALLAGALAA), 84 to 104 (IAWWILLLYMVAAAGWNVADL), 118 to 138 (VIGLAFHLAAVAFLLLARPLF), 152 to 172 (GVLAAGMAVGVLVGWGLLELF), 209 to 229 (VNALLGLFGALALMAAAIVLF), and 308 to 328 (AWLALCGTYGWAPGVMGASVG). The lysine--tRNA ligase stretch occupies residues 614–1112 (MSGLRTDTAD…TLPFPLARPR (499 aa)). The OB DNA-binding region spans 675–748 (VAGRVLRIRD…GTRSLLVRHW (74 aa)). Positions 1024 and 1031 each coordinate Mg(2+).

The protein in the N-terminal section; belongs to the LPG synthetase family. This sequence in the C-terminal section; belongs to the class-II aminoacyl-tRNA synthetase family. Mg(2+) is required as a cofactor.

Its subcellular location is the cell membrane. The catalysed reaction is tRNA(Lys) + L-lysine + ATP = L-lysyl-tRNA(Lys) + AMP + diphosphate. It catalyses the reaction L-lysyl-tRNA(Lys) + a 1,2-diacyl-sn-glycero-3-phospho-(1'-sn-glycerol) = a 1,2-diacyl-sn-glycero-3-phospho-1'-(3'-O-L-lysyl)-sn-glycerol + tRNA(Lys). Functionally, catalyzes the production of L-lysyl-tRNA(Lys)transfer and the transfer of a lysyl group from L-lysyl-tRNA(Lys) to membrane-bound phosphatidylglycerol (PG), which produces lysylphosphatidylglycerol (LPG), one of the components of the bacterial membrane with a positive net charge. LPG synthesis contributes to the resistance to cationic antimicrobial peptides (CAMPs) and likely protects M.tuberculosis against the CAMPs produced by competiting microorganisms (bacteriocins). In fact, the modification of anionic phosphatidylglycerol with positively charged L-lysine results in repulsion of the peptides. This is Lysylphosphatidylglycerol biosynthesis bifunctional protein LysX (lysX) from Mycobacterium sp. (strain KMS).